The primary structure comprises 388 residues: Succinate--CoA ligase [ADP-forming] subunit beta (388 aa).

The ATP-grasp domain maps to 9–244 (KQLFARYGLP…QSQEDPREAQ (236 aa)). Residues lysine 46, 53 to 55 (GRG), glutamate 99, threonine 102, and glutamate 107 contribute to the ATP site. Residues asparagine 199 and aspartate 213 each coordinate Mg(2+). Substrate is bound by residues asparagine 264 and 321 to 323 (GIV).

The protein belongs to the succinate/malate CoA ligase beta subunit family. Heterotetramer of two alpha and two beta subunits. Mg(2+) is required as a cofactor.

The catalysed reaction is succinate + ATP + CoA = succinyl-CoA + ADP + phosphate. The enzyme catalyses GTP + succinate + CoA = succinyl-CoA + GDP + phosphate. Its pathway is carbohydrate metabolism; tricarboxylic acid cycle; succinate from succinyl-CoA (ligase route): step 1/1. Its function is as follows. Succinyl-CoA synthetase functions in the citric acid cycle (TCA), coupling the hydrolysis of succinyl-CoA to the synthesis of either ATP or GTP and thus represents the only step of substrate-level phosphorylation in the TCA. The beta subunit provides nucleotide specificity of the enzyme and binds the substrate succinate, while the binding sites for coenzyme A and phosphate are found in the alpha subunit. This Shigella boydii serotype 18 (strain CDC 3083-94 / BS512) protein is Succinate--CoA ligase [ADP-forming] subunit beta.